We begin with the raw amino-acid sequence, 418 residues long: Vasopressin V1a receptor (418 aa).

Positions 1–15 are enriched in low complexity; the sequence is MRFSGSPSPGPSNSS. A disordered region spans residues 1 to 20; that stretch reads MRFSGSPSPGPSNSSRWWPL. The Extracellular portion of the chain corresponds to 1–51; it reads MRFSGSPSPGPSNSSRWWPLDAGDANTSGDLAGLGEDGGPQADTRNEELAK. N-linked (GlcNAc...) asparagine glycosylation is found at Asn-13 and Asn-26. A helical membrane pass occupies residues 52–75; that stretch reads LEIAVLAVIFVVAVLGNSSVLLAL. The Cytoplasmic segment spans residues 76–87; that stretch reads HRTPRKTSRMHL. Residues 88-109 form a helical membrane-spanning segment; that stretch reads FIRHLSLADLAVAFFQVLPQLG. Over 110–124 the chain is Extracellular; sequence WDITYRFRGPDGLCR. A disulfide bridge connects residues Cys-123 and Cys-202. Residues 125-146 form a helical membrane-spanning segment; the sequence is VVKHMQVFAMFASAYMLVVMTA. At 147–167 the chain is on the cytoplasmic side; sequence DRYIAVCHPLKTLQQPARRSR. The chain crosses the membrane as a helical span at residues 168-189; sequence LMIAAAWVLSFVLSTPQYFVFS. The Extracellular segment spans residues 190-217; that stretch reads MVEVSNVTKTYDCWANFIHPWGLPAYVT. A glycan (N-linked (GlcNAc...) asparagine) is linked at Asn-195. Residues 218–238 form a helical membrane-spanning segment; sequence WMTGSVFVAPVVILGTCYGFI. Topologically, residues 239 to 293 are cytoplasmic; it reads CYHIWRKVRGKTAGRQGGPAEGAGESALYRGVLHARCVSSVKTISRAKIRTVKMT. Residues 294 to 313 form a helical membrane-spanning segment; the sequence is FVIVTAYIVCWAPFFIIQMW. Residues 314–331 lie on the Extracellular side of the membrane; that stretch reads SAWDKNFSWVESENPATA. N-linked (GlcNAc...) asparagine glycosylation is present at Asn-319. A helical membrane pass occupies residues 332–351; it reads IPALLASLNSCCNPWIYMFF. The Cytoplasmic segment spans residues 352-418; the sequence is SGHLLQDCAQ…KSIKFIPVST (67 aa). Residues Cys-365 and Cys-366 are each lipidated (S-palmitoyl cysteine). Residues 377–418 are disordered; that stretch reads GSDSMSRRQTSFTNNRSPTNSMGTWKDSPKSSKSIKFIPVST. Positions 383–399 are enriched in polar residues; sequence RRQTSFTNNRSPTNSMG. At Ser-404 the chain carries Phosphoserine.

It belongs to the G-protein coupled receptor 1 family. Vasopressin/oxytocin receptor subfamily.

It is found in the cell membrane. Functionally, receptor for arginine vasopressin. The activity of this receptor is mediated by G proteins which activate a phosphatidyl-inositol-calcium second messenger system. This is Vasopressin V1a receptor (AVPR1A) from Ovis aries (Sheep).